Here is an 83-residue protein sequence, read N- to C-terminus: Large ribosomal subunit protein eL43 (83 aa).

Zn(2+) contacts are provided by Cys-38, Cys-41, Cys-56, and Cys-59. The segment at 38 to 59 adopts a C4-type zinc-finger fold; it reads CKKCGKKAVKRSGTGIWECRHC.

The protein belongs to the eukaryotic ribosomal protein eL43 family. Putative zinc-binding subfamily. Part of the 50S ribosomal subunit. Zn(2+) serves as cofactor.

In terms of biological role, binds to the 23S rRNA. This chain is Large ribosomal subunit protein eL43, found in Archaeoglobus fulgidus (strain ATCC 49558 / DSM 4304 / JCM 9628 / NBRC 100126 / VC-16).